Consider the following 432-residue polypeptide: Adenylosuccinate synthetase (432 aa).

GTP-binding positions include 12–18 (GDEGKGK) and 40–42 (GHT). Asp13 serves as the catalytic Proton acceptor. Residues Asp13 and Gly40 each coordinate Mg(2+). IMP-binding positions include 13–16 (DEGK), 38–41 (NAGH), Thr129, Arg143, Gln224, Thr239, and Arg303. Catalysis depends on His41, which acts as the Proton donor. Substrate is bound at residue 299–305 (VTTGRRR). Residues Arg305, 331–333 (KLD), and 413–415 (GVG) contribute to the GTP site.

Belongs to the adenylosuccinate synthetase family. Homodimer. The cofactor is Mg(2+).

The protein localises to the cytoplasm. The catalysed reaction is IMP + L-aspartate + GTP = N(6)-(1,2-dicarboxyethyl)-AMP + GDP + phosphate + 2 H(+). Its pathway is purine metabolism; AMP biosynthesis via de novo pathway; AMP from IMP: step 1/2. Plays an important role in the de novo pathway of purine nucleotide biosynthesis. Catalyzes the first committed step in the biosynthesis of AMP from IMP. The sequence is that of Adenylosuccinate synthetase from Mycobacterium marinum (strain ATCC BAA-535 / M).